The sequence spans 91 residues: Putative transmembrane protein encoded by LINC00862 (91 aa).

The chain crosses the membrane as a helical span at residues 49–69 (IMALILMPSLHCFGNILILLF).

The protein resides in the membrane. This Homo sapiens (Human) protein is Putative transmembrane protein encoded by LINC00862 (LINC00862).